We begin with the raw amino-acid sequence, 81 residues long: Costars family protein ABRACL (81 aa).

This sequence belongs to the costars family.

The protein is Costars family protein ABRACL of Coturnix coturnix (Common quail).